Reading from the N-terminus, the 290-residue chain is Fructose-1,6-bisphosphatase class 1 (290 aa).

Glu78, Asp96, Leu98, and Asp99 together coordinate Mg(2+). Residues 99–102, Tyr201, and Lys226 contribute to the substrate site; that span reads DGSS. Glu232 lines the Mg(2+) pocket.

Belongs to the FBPase class 1 family. In terms of assembly, homotetramer. The cofactor is Mg(2+).

The protein resides in the cytoplasm. It carries out the reaction beta-D-fructose 1,6-bisphosphate + H2O = beta-D-fructose 6-phosphate + phosphate. The protein operates within carbohydrate biosynthesis; gluconeogenesis. This is Fructose-1,6-bisphosphatase class 1 from Helicobacter pylori (strain J99 / ATCC 700824) (Campylobacter pylori J99).